Consider the following 144-residue polypeptide: 3-hydroxyacyl-[acyl-carrier-protein] dehydratase FabZ (144 aa).

The active site involves His-49.

Belongs to the thioester dehydratase family. FabZ subfamily.

The protein resides in the cytoplasm. The catalysed reaction is a (3R)-hydroxyacyl-[ACP] = a (2E)-enoyl-[ACP] + H2O. In terms of biological role, involved in unsaturated fatty acids biosynthesis. Catalyzes the dehydration of short chain beta-hydroxyacyl-ACPs and long chain saturated and unsaturated beta-hydroxyacyl-ACPs. This is 3-hydroxyacyl-[acyl-carrier-protein] dehydratase FabZ from Alkaliphilus oremlandii (strain OhILAs) (Clostridium oremlandii (strain OhILAs)).